Here is a 353-residue protein sequence, read N- to C-terminus: Replication factor C subunit 2 (353 aa).

Position 1 is an N-acetylmethionine (Met-1). Residues Val-28, Arg-32, 65–73 (GPPGTGKTS), Asn-171, and Arg-229 contribute to the ATP site.

It belongs to the activator 1 small subunits family. In terms of assembly, replication factor C (RFC) is a heteropentamer of subunits RFC1, RFC2, RFC3, RFC4 and RFC5 and forms a complex with POL30/PCNA in the presence of ATP. Component of the RAD24-RFC complex which consists of RAD14, RFC2, RFC3, RFC4 and RFC5 and associates with the checkpoint clamp DDC1:MEC3:RAD17 complex. Component of the ELG1-RFC complex which consists of ELG1, RFC2, RFC3, RFC4 and RFC5. Component of the CTF18-RFC complex, which consists of CTF18, CTF8, DCC1, RFC2, RFC3, RFC4 and RFC5. RFC2 interacts with ECO1.

Its subcellular location is the nucleus. Component of ATP-dependent clamp loader (RFC and RFC-like) complexes for DNA clamps, such as the POL30/PCNA homotrimer and the checkpoint clamp DDC1:MEC3:RAD17 complex. During a clamp loading circle, the RFC:clamp complex binds to DNA and the recognition of the double-stranded/single-stranded junction stimulates ATP hydrolysis by RFC. The complex presumably provides bipartite ATP sites in which one subunit supplies a catalytic site for hydrolysis of ATP bound to the neighboring subunit. Dissociation of RFC from the clamp leaves the clamp encircling DNA. Component of the replication factor C (RFC or activator 1) complex which loads POL30/PCNA and acts during elongation of primed DNA templates by DNA polymerase delta and epsilon. RFC has an essential but redundant activity in sister chromatid cohesion establishment. Component of the RFC-like complex CTF18-RFC which is required for efficient establishment of chromosome cohesion during S-phase and may load or unload POL30/PCNA. Component of the RFC-like RAD24-RFC complex which loads the checkpoint clamp DDC1:MEC3:RAD17 complex and is involved in DNA repair pathways. Component of the RFC-like ELG1-RFC complex which appears to have a role in DNA replication, replication fork re-start, recombination and repair. RFC2 binds ATP and single-stranded DNA. This chain is Replication factor C subunit 2 (RFC2), found in Saccharomyces cerevisiae (strain ATCC 204508 / S288c) (Baker's yeast).